The sequence spans 92 residues: Alpha-defensin 25 (92 aa).

A signal peptide spans 1-19; that stretch reads MKTLVLLSALALLAFQVQA. Positions 20–57 are excised as a propeptide; sequence DPIQNRDEESKIDEQPGKEDQAVSVSFGDPEGSSLQEE. Basic and acidic residues predominate over residues 24 to 40; sequence NRDEESKIDEQPGKEDQ. Residues 24–53 are disordered; it reads NRDEESKIDEQPGKEDQAVSVSFGDPEGSS. 3 disulfide bridges follow: C63–C92, C65–C80, and C70–C91.

The protein belongs to the alpha-defensin family.

Its subcellular location is the secreted. In terms of biological role, may have microbicidal activities. The sequence is that of Alpha-defensin 25 (Defa25) from Mus musculus (Mouse).